A 935-amino-acid chain; its full sequence is Auxin response factor 6 (935 aa).

The TF-B3 DNA-binding region spans 129–231 (FCKTLTASDT…QLLLGIRRAN (103 aa)). 2 disordered regions span residues 536 to 624 (QAYL…PLHT) and 645 to 714 (SAMT…SASD). Composition is skewed to low complexity over residues 546-565 (QPQS…QQQQ) and 573-582 (SASSAAVVSA). Polar residues-rich tracts occupy residues 583 to 624 (MSQF…PLHT) and 661 to 689 (SSFQ…SNVP). The PB1 domain occupies 796–880 (NTFVKVYKSG…WCIKILSPQE (85 aa)). Residues 896-909 (PSSNNVDKLPSNGN) are compositionally biased toward polar residues. The disordered stretch occupies residues 896 to 917 (PSSNNVDKLPSNGNCDDFGNRS).

Belongs to the ARF family. As to quaternary structure, homodimers and heterodimers. Expressed in the whole plant.

The protein localises to the nucleus. Functionally, auxin response factors (ARFs) are transcriptional factors that bind specifically to the DNA sequence 5'-TGTCTC-3' found in the auxin-responsive promoter elements (AuxREs). Seems to act as transcriptional activator. Formation of heterodimers with Aux/IAA proteins may alter their ability to modulate early auxin response genes expression. Regulates both stamen and gynoecium maturation. Promotes jasmonic acid production. Partially redundant with ARF8. This is Auxin response factor 6 (ARF6) from Arabidopsis thaliana (Mouse-ear cress).